Consider the following 296-residue polypeptide: Ribosomal RNA small subunit methyltransferase A (296 aa).

Residues asparagine 31, leucine 33, glycine 58, glutamate 79, aspartate 111, and asparagine 136 each coordinate S-adenosyl-L-methionine.

This sequence belongs to the class I-like SAM-binding methyltransferase superfamily. rRNA adenine N(6)-methyltransferase family. RsmA subfamily.

It localises to the cytoplasm. It catalyses the reaction adenosine(1518)/adenosine(1519) in 16S rRNA + 4 S-adenosyl-L-methionine = N(6)-dimethyladenosine(1518)/N(6)-dimethyladenosine(1519) in 16S rRNA + 4 S-adenosyl-L-homocysteine + 4 H(+). Functionally, specifically dimethylates two adjacent adenosines (A1518 and A1519) in the loop of a conserved hairpin near the 3'-end of 16S rRNA in the 30S particle. May play a critical role in biogenesis of 30S subunits. The sequence is that of Ribosomal RNA small subunit methyltransferase A from Lactobacillus delbrueckii subsp. bulgaricus (strain ATCC BAA-365 / Lb-18).